Here is a 248-residue protein sequence, read N- to C-terminus: Pyridoxine 5'-phosphate synthase (248 aa).

Asn-9 is a 3-amino-2-oxopropyl phosphate binding site. 1-deoxy-D-xylulose 5-phosphate is bound at residue 11 to 12; the sequence is DH. Arg-20 is a 3-amino-2-oxopropyl phosphate binding site. The active-site Proton acceptor is His-45. 1-deoxy-D-xylulose 5-phosphate is bound by residues Arg-47 and His-52. Residue Glu-72 is the Proton acceptor of the active site. Residue Thr-102 participates in 1-deoxy-D-xylulose 5-phosphate binding. His-193 functions as the Proton donor in the catalytic mechanism. 3-amino-2-oxopropyl phosphate contacts are provided by residues Gly-194 and 215–216; that span reads GH.

Belongs to the PNP synthase family. Homooctamer; tetramer of dimers.

The protein localises to the cytoplasm. It catalyses the reaction 3-amino-2-oxopropyl phosphate + 1-deoxy-D-xylulose 5-phosphate = pyridoxine 5'-phosphate + phosphate + 2 H2O + H(+). It functions in the pathway cofactor biosynthesis; pyridoxine 5'-phosphate biosynthesis; pyridoxine 5'-phosphate from D-erythrose 4-phosphate: step 5/5. Its function is as follows. Catalyzes the complicated ring closure reaction between the two acyclic compounds 1-deoxy-D-xylulose-5-phosphate (DXP) and 3-amino-2-oxopropyl phosphate (1-amino-acetone-3-phosphate or AAP) to form pyridoxine 5'-phosphate (PNP) and inorganic phosphate. The sequence is that of Pyridoxine 5'-phosphate synthase from Hydrogenovibrio crunogenus (strain DSM 25203 / XCL-2) (Thiomicrospira crunogena).